The primary structure comprises 201 residues: Adenylyl-sulfate kinase (201 aa).

Position 35–42 (35–42) interacts with ATP; the sequence is GLSGSGKS. Catalysis depends on S109, which acts as the Phosphoserine intermediate.

It belongs to the APS kinase family.

It carries out the reaction adenosine 5'-phosphosulfate + ATP = 3'-phosphoadenylyl sulfate + ADP + H(+). It functions in the pathway sulfur metabolism; hydrogen sulfide biosynthesis; sulfite from sulfate: step 2/3. Catalyzes the synthesis of activated sulfate. This is Adenylyl-sulfate kinase from Salmonella paratyphi A (strain AKU_12601).